The primary structure comprises 377 residues: tRNA(Met) cytidine acetate ligase (377 aa).

ATP is bound by residues 7–20 (ITEY…HLYH), Gly-101, Asn-152, and Arg-179.

Belongs to the TmcAL family.

It localises to the cytoplasm. It catalyses the reaction cytidine(34) in elongator tRNA(Met) + acetate + ATP = N(4)-acetylcytidine(34) in elongator tRNA(Met) + AMP + diphosphate. Its function is as follows. Catalyzes the formation of N(4)-acetylcytidine (ac(4)C) at the wobble position of elongator tRNA(Met), using acetate and ATP as substrates. First activates an acetate ion to form acetyladenylate (Ac-AMP) and then transfers the acetyl group to tRNA to form ac(4)C34. This Oenococcus oeni (strain ATCC BAA-331 / PSU-1) protein is tRNA(Met) cytidine acetate ligase.